Consider the following 838-residue polypeptide: Protein translocase subunit SecA 1 (838 aa).

ATP-binding positions include Gln-85, 103–107, and Asp-493; that span reads GEGKT. Residues Cys-823, Cys-825, Cys-834, and His-835 each contribute to the Zn(2+) site.

It belongs to the SecA family. As to quaternary structure, monomer and homodimer. Part of the essential Sec protein translocation apparatus which comprises SecA, SecYEG and auxiliary proteins SecDF. Other proteins may also be involved. Zn(2+) serves as cofactor.

It is found in the cell membrane. The protein localises to the cytoplasm. It carries out the reaction ATP + H2O + cellular proteinSide 1 = ADP + phosphate + cellular proteinSide 2.. Its function is as follows. Part of the Sec protein translocase complex. Interacts with the SecYEG preprotein conducting channel. Has a central role in coupling the hydrolysis of ATP to the transfer of proteins into and across the cell membrane, serving as an ATP-driven molecular motor driving the stepwise translocation of polypeptide chains across the membrane. The sequence is that of Protein translocase subunit SecA 1 from Streptococcus gordonii.